We begin with the raw amino-acid sequence, 281 residues long: Tumor necrosis factor ligand superfamily member 6 (281 aa).

At methionine 1–glycine 80 the chain is on the cytoplasmic side. The interval serine 20–leucine 71 is disordered. Pro residues predominate over residues arginine 43–proline 70. A helical; Signal-anchor for type II membrane protein membrane pass occupies residues leucine 81 to phenylalanine 102. The Extracellular segment spans residues glutamine 103–leucine 281. Over residues threonine 118–glutamate 128 the composition is skewed to polar residues. The segment at threonine 118–glutamate 142 is disordered. The THD domain maps to lysine 145–leucine 281. Asparagine 184 carries an N-linked (GlcNAc...) asparagine glycan. Cysteine 202 and cysteine 233 are joined by a disulfide. Residues asparagine 250 and asparagine 260 are each glycosylated (N-linked (GlcNAc...) asparagine).

The protein belongs to the tumor necrosis factor family. As to quaternary structure, homotrimer. Interacts with ARHGAP9, BAIAP2L1, BTK, CACNB3, CACNB4, CRK, DLG2, DNMBP, DOCK4, EPS8L3, FGR, FYB1, FYN, HCK, ITK, ITSN2, KALRN, LYN, MACC1, MIA, MPP4, MYO15A, NCF1, NCK1, NCK2, NCKIPSD, OSTF1, PIK3R1, PSTPIP1, RIMBP3C, SAMSN1, SH3GL3, SH3PXD2B, SH3PXD2A, SH3RF2, SKAP2, SNX33, SNX9, SORBS3, SPTA1, SRC, SRGAP1, SRGAP2, SRGAP3, TEC, TJP3 and YES1. The soluble form derives from the membrane form by proteolytic processing. The membrane-bound form undergoes two successive intramembrane proteolytic cleavages. The first one is processed by ADAM10 producing an N-terminal fragment, which lacks the receptor-binding extracellular domain. This ADAM10-processed FasL (FasL APL) remnant form is still membrane anchored and further processed by SPPL2A that liberates the FasL intracellular domain (FasL ICD). FasL shedding by ADAM10 is a prerequisite for subsequent intramembrane cleavage by SPPL2A in T-cells. In terms of processing, N-glycosylated. Glycosylation enhances apoptotic activity. Post-translationally, phosphorylated by FGR on tyrosine residues; this is required for ubiquitination and subsequent internalization. Monoubiquitinated.

Its subcellular location is the cell membrane. The protein resides in the cytoplasmic vesicle lumen. The protein localises to the lysosome lumen. It localises to the secreted. It is found in the nucleus. Its function is as follows. Cytokine that binds to TNFRSF6/FAS, a receptor that transduces the apoptotic signal into cells. Involved in cytotoxic T-cell-mediated apoptosis, natural killer cell-mediated apoptosis and in T-cell development. Initiates fratricidal/suicidal activation-induced cell death (AICD) in antigen-activated T-cells contributing to the termination of immune responses. TNFRSF6/FAS-mediated apoptosis also has a role in the induction of peripheral tolerance. Binds to TNFRSF6B/DcR3, a decoy receptor that blocks apoptosis. In terms of biological role, induces FAS-mediated activation of NF-kappa-B, initiating non-apoptotic signaling pathways. Can induce apoptosis but does not appear to be essential for this process. Functionally, cytoplasmic form induces gene transcription inhibition. The protein is Tumor necrosis factor ligand superfamily member 6 (FASLG) of Homo sapiens (Human).